Here is a 479-residue protein sequence, read N- to C-terminus: Bifunctional NAD(P)H-hydrate repair enzyme Nnr (479 aa).

An NAD(P)H-hydrate epimerase region spans residues 1–214 (MTVIIQGRSF…GIGIPLLAEI (214 aa)). In terms of domain architecture, YjeF N-terminal spans 31-214 (MRRIDQNAQA…GIGIPLLAEI (184 aa)). Positions 76–80 (NNGGD) are NADPHX 1; for epimerase activity. Positions 77 and 146 each coordinate K(+). The interval 150–156 (GTGGTGS) is NADPHX 1; for epimerase activity. Asp179 is a binding site for (6S)-NADPHX. Ser182 provides a ligand contact to K(+). Residues 216-474 (TGPGDLLILR…TAVPQVLFRS (259 aa)) enclose the YjeF C-terminal domain. Residues 216–479 (TGPGDLLILR…VLFRSTSERE (264 aa)) are ADP-dependent (S)-NAD(P)H-hydrate dehydratase. Position 312 (Gly312) interacts with (6S)-NADPHX. Positions 353 to 359 (HAGEFAR) are NADPHX 2; for dehydratase activity. Residues 388–392 (KGAVD) and 407–416 (TPAMTTGGTG) each bind ADP. Asp417 serves as a coordination point for (6S)-NADPHX.

The protein in the N-terminal section; belongs to the NnrE/AIBP family. In the C-terminal section; belongs to the NnrD/CARKD family. K(+) serves as cofactor.

It carries out the reaction (6S)-NADHX + ADP = AMP + phosphate + NADH + H(+). The enzyme catalyses (6S)-NADPHX + ADP = AMP + phosphate + NADPH + H(+). It catalyses the reaction (6R)-NADHX = (6S)-NADHX. The catalysed reaction is (6R)-NADPHX = (6S)-NADPHX. In terms of biological role, bifunctional enzyme that catalyzes the epimerization of the S- and R-forms of NAD(P)HX and the dehydration of the S-form of NAD(P)HX at the expense of ADP, which is converted to AMP. This allows the repair of both epimers of NAD(P)HX, a damaged form of NAD(P)H that is a result of enzymatic or heat-dependent hydration. The chain is Bifunctional NAD(P)H-hydrate repair enzyme Nnr (nnr) from Methanospirillum hungatei JF-1 (strain ATCC 27890 / DSM 864 / NBRC 100397 / JF-1).